The chain runs to 106 residues: UPF0145 protein BF0270 (106 aa).

The protein belongs to the UPF0145 family.

The polypeptide is UPF0145 protein BF0270 (Bacteroides fragilis (strain YCH46)).